A 505-amino-acid polypeptide reads, in one-letter code: Histidine ammonia-lyase (505 aa).

The segment at residues 141 to 143 (ASG) is a cross-link (5-imidazolinone (Ala-Gly)). Ser142 is modified (2,3-didehydroalanine (Ser)).

It belongs to the PAL/histidase family. Post-translationally, contains an active site 4-methylidene-imidazol-5-one (MIO), which is formed autocatalytically by cyclization and dehydration of residues Ala-Ser-Gly.

The protein resides in the cytoplasm. The catalysed reaction is L-histidine = trans-urocanate + NH4(+). Its pathway is amino-acid degradation; L-histidine degradation into L-glutamate; N-formimidoyl-L-glutamate from L-histidine: step 1/3. The sequence is that of Histidine ammonia-lyase from Bacillus cereus (strain ATCC 10987 / NRS 248).